Reading from the N-terminus, the 97-residue chain is Aspartyl/glutamyl-tRNA(Asn/Gln) amidotransferase subunit C (97 aa).

Belongs to the GatC family. Heterotrimer of A, B and C subunits.

It carries out the reaction L-glutamyl-tRNA(Gln) + L-glutamine + ATP + H2O = L-glutaminyl-tRNA(Gln) + L-glutamate + ADP + phosphate + H(+). The enzyme catalyses L-aspartyl-tRNA(Asn) + L-glutamine + ATP + H2O = L-asparaginyl-tRNA(Asn) + L-glutamate + ADP + phosphate + 2 H(+). Allows the formation of correctly charged Asn-tRNA(Asn) or Gln-tRNA(Gln) through the transamidation of misacylated Asp-tRNA(Asn) or Glu-tRNA(Gln) in organisms which lack either or both of asparaginyl-tRNA or glutaminyl-tRNA synthetases. The reaction takes place in the presence of glutamine and ATP through an activated phospho-Asp-tRNA(Asn) or phospho-Glu-tRNA(Gln). The chain is Aspartyl/glutamyl-tRNA(Asn/Gln) amidotransferase subunit C from Anaeromyxobacter sp. (strain K).